A 215-amino-acid polypeptide reads, in one-letter code: Wtf element wtf7 (215 aa).

The disordered stretch occupies residues Met1 to Asn21. Helical transmembrane passes span Leu119–Phe139, Leu149–Leu169, and Leu189–Tyr209.

Belongs to the WTF family.

It is found in the spore membrane. In terms of biological role, may act in meiotic drive. The protein is Wtf element wtf7 of Schizosaccharomyces pombe (strain 972 / ATCC 24843) (Fission yeast).